A 208-amino-acid polypeptide reads, in one-letter code: NAD(P)H-quinone oxidoreductase subunit I (208 aa).

4Fe-4S ferredoxin-type domains lie at 55-84 (GRIHYEFDKCIACEVCVRVCPINLPVVDWV) and 95-124 (RNYSIDFGVCIFCGNCVEYCPTNCLSMTEE). [4Fe-4S] cluster is bound by residues C64, C67, C70, C74, C104, C107, C110, and C114.

Belongs to the complex I 23 kDa subunit family. In terms of assembly, NDH-1 is composed of at least 11 different subunits. [4Fe-4S] cluster serves as cofactor.

The protein localises to the cellular thylakoid membrane. It catalyses the reaction a plastoquinone + NADH + (n+1) H(+)(in) = a plastoquinol + NAD(+) + n H(+)(out). It carries out the reaction a plastoquinone + NADPH + (n+1) H(+)(in) = a plastoquinol + NADP(+) + n H(+)(out). Its function is as follows. NDH-1 shuttles electrons from an unknown electron donor, via FMN and iron-sulfur (Fe-S) centers, to quinones in the respiratory and/or the photosynthetic chain. The immediate electron acceptor for the enzyme in this species is believed to be plastoquinone. Couples the redox reaction to proton translocation, and thus conserves the redox energy in a proton gradient. This is NAD(P)H-quinone oxidoreductase subunit I from Prochlorococcus marinus (strain AS9601).